The sequence spans 764 residues: Metabotropic glutamate receptor-like protein H (764 aa).

The signal sequence occupies residues 1–20; that stretch reads MKNILKILILILICINKINC. Residues 21–393 lie on the Extracellular side of the membrane; it reads LDGDGKQFRM…EVEFSQSIQN (373 aa). N-linked (GlcNAc...) asparagine glycosylation is found at N72, N260, N278, N344, and N379. The chain crosses the membrane as a helical span at residues 394-414; sequence GFSITTGILIGITILMMIGII. At 415 to 427 the chain is on the cytoplasmic side; it reads KYSKTPSMRSASP. A helical membrane pass occupies residues 428-448; that stretch reads IFLNFILAGGIIVYIGIIVWV. Residues 449-464 are Extracellular-facing; it reads GPMSTHSCNARLWLVT. A helical transmembrane segment spans residues 465-485; that stretch reads LGFSTLIGSLVVKNFRIWLIF. Topologically, residues 486 to 500 are cytoplasmic; sequence DNPELKSIKITNYQL. Residues 501–521 form a helical membrane-spanning segment; the sequence is FPWVGACLVINIILMAILTSV. Residues 522–552 are Extracellular-facing; sequence GDLKQIDAMNIDSLGKYEYMKVCKMNSSGAS. N-linked (GlcNAc...) asparagine glycosylation is present at N547. A helical membrane pass occupies residues 553-573; that stretch reads TLYTILAYFAALLLVGVFVSW. At 574–587 the chain is on the cytoplasmic side; sequence KIRIVDILEFNESG. The helical transmembrane segment at 588 to 608 threads the bilayer; that stretch reads AIANTLYAISFCLFVIVPLMI. Over 609-617 the chain is Extracellular; that stretch reads SPQDMQSET. A helical membrane pass occupies residues 618-638; it reads IILCTTGLFITTAALLIIFIP. Over 639 to 764 the chain is Cytoplasmic; the sequence is KFWRVFRKGA…IIVNDSENNN (126 aa). The segment at 664 to 764 is disordered; the sequence is ATARAESGSK…IIVNDSENNN (101 aa). Over residues 671 to 690 the composition is skewed to low complexity; the sequence is GSKGSNGNASSGNRTNRRGN. Residues 707-719 show a composition bias toward basic and acidic residues; the sequence is ENQKEKEKIKDDV. A compositionally biased stretch (acidic residues) spans 731–748; the sequence is FTDEASDTDNNEFNDIEL.

The protein in the N-terminal section; belongs to the BMP lipoprotein family. In the C-terminal section; belongs to the G-protein coupled receptor 3 family. GABA-B receptor subfamily.

The protein localises to the membrane. The chain is Metabotropic glutamate receptor-like protein H (grlH) from Dictyostelium discoideum (Social amoeba).